Consider the following 200-residue polypeptide: Pyrrolidone-carboxylate peptidase (200 aa).

Active-site residues include Glu79, Cys142, and His166.

The protein belongs to the peptidase C15 family. Homotetramer.

It localises to the cytoplasm. The enzyme catalyses Release of an N-terminal pyroglutamyl group from a polypeptide, the second amino acid generally not being Pro.. Functionally, removes 5-oxoproline from various penultimate amino acid residues except L-proline. This chain is Pyrrolidone-carboxylate peptidase (pcp), found in Pyrococcus abyssi (strain GE5 / Orsay).